The primary structure comprises 154 residues: Cytochrome c-type biogenesis protein CcmE (154 aa).

Residues 1-8 (MHPQRKQR) are Cytoplasmic-facing. Residues 9-29 (LMIVLFIVVFSSLAVGLIAYA) form a helical; Signal-anchor for type II membrane protein membrane-spanning segment. Topologically, residues 30–154 (LRENINLFYP…ATCGGLNYGA (125 aa)) are periplasmic. Positions 124 and 128 each coordinate heme.

The protein belongs to the CcmE/CycJ family.

The protein localises to the cell inner membrane. Its function is as follows. Heme chaperone required for the biogenesis of c-type cytochromes. Transiently binds heme delivered by CcmC and transfers the heme to apo-cytochromes in a process facilitated by CcmF and CcmH. In Cellvibrio japonicus (strain Ueda107) (Pseudomonas fluorescens subsp. cellulosa), this protein is Cytochrome c-type biogenesis protein CcmE.